Consider the following 145-residue polypeptide: Large ribosomal subunit protein uL15 (145 aa).

The interval 1–42 (MELHTLKATPGSRKAKHRVGRGHAAGKGKQAGRGQSGQTKRS) is disordered. The segment covering 13–26 (RKAKHRVGRGHAAG) has biased composition (basic residues).

This sequence belongs to the universal ribosomal protein uL15 family. As to quaternary structure, part of the 50S ribosomal subunit.

Binds to the 23S rRNA. The protein is Large ribosomal subunit protein uL15 of Metamycoplasma arthritidis (strain 158L3-1) (Mycoplasma arthritidis).